Reading from the N-terminus, the 152-residue chain is Transcriptional regulator MraZ (152 aa).

2 consecutive SpoVT-AbrB domains span residues 5 to 52 and 81 to 124; these read ASAI…PADE and AHEI…DEAQ.

Belongs to the MraZ family. In terms of assembly, forms oligomers.

The protein localises to the cytoplasm. The protein resides in the nucleoid. This Shewanella amazonensis (strain ATCC BAA-1098 / SB2B) protein is Transcriptional regulator MraZ.